Here is a 211-residue protein sequence, read N- to C-terminus: Prolactin-1 (211 aa).

The signal sequence occupies residues 1–23 (MARRSQGTKLHLAVLCLVVSCHA). Cystine bridges form between C69–C184 and C201–C211.

The protein belongs to the somatotropin/prolactin family.

It localises to the secreted. The protein is Prolactin-1 (prl1) of Oncorhynchus keta (Chum salmon).